A 113-amino-acid polypeptide reads, in one-letter code: Protein S100-A9 (113 aa).

Ala2 is subject to N-acetylalanine. 2 EF-hand domains span residues 13–48 (ITTI…QLAT) and 55–90 (RNEA…LIFA). His21 provides a ligand contact to Zn(2+). The Ca(2+) site is built by Ser24 and His29. Asp31 contributes to the Zn(2+) binding site. Residues Thr32, Glu37, Asp68, Asn70, Asp72, Gln74, and Glu79 each contribute to the Ca(2+) site. His92 and His96 together coordinate Zn(2+). His107 bears the Pros-methylhistidine mark.

This sequence belongs to the S-100 family. As to quaternary structure, homodimer. Preferentially exists as a heterodimer or heterotetramer with S100A8 known as calprotectin (S100A8/A9). S100A9 interacts with ATP2A2. S100A9 interacts with AGER, and with the heterodimeric complex formed by TLR4 and LY96 in the presence of calcium and/or zinc ions. S100A9 binds quinoline-3-carboxamides in the presence of calcium and/or zinc ions. S100A9 interacts with amyloid-beta protein 40. Calprotectin (S100A8/9) interacts with CEACAM3 and tubulin filaments in a calcium-dependent manner. Heterotetrameric calprotectin (S100A8/A9) interacts with ANXA6 and associates with tubulin filaments in activated monocytes. Calprotectin (S100A8/9) interacts with NCF2/P67PHOX, RAC1, RAC2, CYBA and CYBB. Calprotectin (S100A8/9) interacts with NOS2 to form the iNOS-S100A8/A9 transnitrosylase complex; induced by LDL(ox). Calprotectin (S100A8/9) interacts with CD69. Phosphorylated. Phosphorylation inhibits activation of tubulin polymerization. In terms of processing, methylation at His-107 by METTL9 reduces zinc-binding without affecting heterodimerization with S100A8.

The protein localises to the secreted. It is found in the cytoplasm. The protein resides in the cytoskeleton. It localises to the cell membrane. Functionally, S100A9 is a calcium- and zinc-binding protein which plays a prominent role in the regulation of inflammatory processes and immune response. It can induce neutrophil chemotaxis, adhesion, can increase the bactericidal activity of neutrophils by promoting phagocytosis via activation of SYK, PI3K/AKT, and ERK1/2 and can induce degranulation of neutrophils by a MAPK-dependent mechanism. Predominantly found as calprotectin (S100A8/A9) which has a wide plethora of intra- and extracellular functions. The intracellular functions include: facilitating leukocyte arachidonic acid trafficking and metabolism, modulation of the tubulin-dependent cytoskeleton during migration of phagocytes and activation of the neutrophilic NADPH-oxidase. Also participates in regulatory T-cell differentiation together with CD69. Activates NADPH-oxidase by facilitating the enzyme complex assembly at the cell membrane, transferring arachidonic acid, an essential cofactor, to the enzyme complex and S100A8 contributes to the enzyme assembly by directly binding to NCF2/P67PHOX. The extracellular functions involve pro-inflammatory, antimicrobial, oxidant-scavenging and apoptosis-inducing activities. Its pro-inflammatory activity includes recruitment of leukocytes, promotion of cytokine and chemokine production, and regulation of leukocyte adhesion and migration. Acts as an alarmin or a danger associated molecular pattern (DAMP) molecule and stimulates innate immune cells via binding to pattern recognition receptors such as Toll-like receptor 4 (TLR4) and receptor for advanced glycation endproducts (AGER). Binding to TLR4 and AGER activates the MAP-kinase and NF-kappa-B signaling pathways resulting in the amplification of the pro-inflammatory cascade. Has antimicrobial activity towards bacteria and fungi and exerts its antimicrobial activity probably via chelation of Zn(2+) which is essential for microbial growth. Can induce cell death via autophagy and apoptosis and this occurs through the cross-talk of mitochondria and lysosomes via reactive oxygen species (ROS) and the process involves BNIP3. Can regulate neutrophil number and apoptosis by an anti-apoptotic effect; regulates cell survival via ITGAM/ITGB and TLR4 and a signaling mechanism involving MEK-ERK. Its role as an oxidant scavenger has a protective role in preventing exaggerated tissue damage by scavenging oxidants. The iNOS-S100A8/A9 transnitrosylase complex is proposed to direct selective inflammatory stimulus-dependent S-nitrosylation of multiple targets such as GAPDH, NXA5, EZR, MSN and VIM by recognizing a [IL]-x-C-x-x-[DE] motif. In Mus musculus (Mouse), this protein is Protein S100-A9 (S100a9).